The following is a 54-amino-acid chain: ATP synthase F(0) complex subunit 8 (54 aa).

Residues 4–24 (LNPGPWFAILVFSWLIFLTII) traverse the membrane as a helical segment. Residues 35 to 54 (NEPTPVSAEKHKTESWDWPW) form a disordered region. Basic and acidic residues predominate over residues 42-54 (AEKHKTESWDWPW).

It belongs to the ATPase protein 8 family. In terms of assembly, component of the ATP synthase complex composed at least of ATP5F1A/subunit alpha, ATP5F1B/subunit beta, ATP5MC1/subunit c (homooctomer), MT-ATP6/subunit a, MT-ATP8/subunit 8, ATP5ME/subunit e, ATP5MF/subunit f, ATP5MG/subunit g, ATP5MK/subunit k, ATP5MJ/subunit j, ATP5F1C/subunit gamma, ATP5F1D/subunit delta, ATP5F1E/subunit epsilon, ATP5PF/subunit F6, ATP5PB/subunit b, ATP5PD/subunit d, ATP5PO/subunit OSCP. ATP synthase complex consists of a soluble F(1) head domain (subunits alpha(3) and beta(3)) - the catalytic core - and a membrane F(0) domain - the membrane proton channel (subunits c, a, 8, e, f, g, k and j). These two domains are linked by a central stalk (subunits gamma, delta, and epsilon) rotating inside the F1 region and a stationary peripheral stalk (subunits F6, b, d, and OSCP).

It localises to the mitochondrion membrane. Its function is as follows. Subunit 8, of the mitochondrial membrane ATP synthase complex (F(1)F(0) ATP synthase or Complex V) that produces ATP from ADP in the presence of a proton gradient across the membrane which is generated by electron transport complexes of the respiratory chain. ATP synthase complex consist of a soluble F(1) head domain - the catalytic core - and a membrane F(1) domain - the membrane proton channel. These two domains are linked by a central stalk rotating inside the F(1) region and a stationary peripheral stalk. During catalysis, ATP synthesis in the catalytic domain of F(1) is coupled via a rotary mechanism of the central stalk subunits to proton translocation. In vivo, can only synthesize ATP although its ATP hydrolase activity can be activated artificially in vitro. Part of the complex F(0) domain. The protein is ATP synthase F(0) complex subunit 8 of Cyprinus carpio (Common carp).